The primary structure comprises 556 residues: Formate--tetrahydrofolate ligase 1 (556 aa).

65-72 (TPAGEGKS) lines the ATP pocket.

The protein belongs to the formate--tetrahydrofolate ligase family.

It carries out the reaction (6S)-5,6,7,8-tetrahydrofolate + formate + ATP = (6R)-10-formyltetrahydrofolate + ADP + phosphate. It participates in one-carbon metabolism; tetrahydrofolate interconversion. In Streptococcus pyogenes serotype M18 (strain MGAS8232), this protein is Formate--tetrahydrofolate ligase 1.